A 140-amino-acid polypeptide reads, in one-letter code: ATP synthase epsilon chain (140 aa).

It belongs to the ATPase epsilon chain family. As to quaternary structure, F-type ATPases have 2 components, CF(1) - the catalytic core - and CF(0) - the membrane proton channel. CF(1) has five subunits: alpha(3), beta(3), gamma(1), delta(1), epsilon(1). CF(0) has three main subunits: a, b and c.

Its subcellular location is the cell membrane. Produces ATP from ADP in the presence of a proton gradient across the membrane. The chain is ATP synthase epsilon chain from Baumannia cicadellinicola subsp. Homalodisca coagulata.